Consider the following 448-residue polypeptide: Potassium/proton antiporter CemA (448 aa).

Transmembrane regions (helical) follow at residues 47–67 (IVFY…LSLL), 213–233 (LSSL…STLF), 314–334 (IISH…LFVA), and 395–415 (IISC…KYLI).

It belongs to the CemA family.

It localises to the plastid membrane. It carries out the reaction K(+)(in) + H(+)(out) = K(+)(out) + H(+)(in). Functionally, may be involved in proton extrusion. The polypeptide is Potassium/proton antiporter CemA (Aneura mirabilis (Parasitic liverwort)).